We begin with the raw amino-acid sequence, 337 residues long: MRLTASAIAGQFGLTVLGDGSTEVSGVATLAHAGAGQLSFLSNPRYRPQLADSQAAVVVLRADDAEAAKGTALVAKDPYTAFAKIAALFDVAQVCEPGIHPSAFIDPTAQVSPGAHVGPFVSIGARSRVGDGCVIGTGSLIGADCVVDDGSELLARVTLVTRVRLGKRVRIHPGAVIGADGFGLAMDAGHWIKVPQLGGVVIGDDCEIGANTCIDRGALEDTVLEEDVRVDNLVQIAHNCRIGAHSAIAGCSGIAGSAKIGRYCLLGGHVGVVGHLEICDKVVITGKSVVRNSINEPGEYSSGTPLTDNRTWRKNAARFKQLDVLARRILAVGKEKE.

Catalysis depends on His-238, which acts as the Proton acceptor.

This sequence belongs to the transferase hexapeptide repeat family. LpxD subfamily. In terms of assembly, homotrimer.

It catalyses the reaction a UDP-3-O-[(3R)-3-hydroxyacyl]-alpha-D-glucosamine + a (3R)-hydroxyacyl-[ACP] = a UDP-2-N,3-O-bis[(3R)-3-hydroxyacyl]-alpha-D-glucosamine + holo-[ACP] + H(+). The protein operates within bacterial outer membrane biogenesis; LPS lipid A biosynthesis. In terms of biological role, catalyzes the N-acylation of UDP-3-O-acylglucosamine using 3-hydroxyacyl-ACP as the acyl donor. Is involved in the biosynthesis of lipid A, a phosphorylated glycolipid that anchors the lipopolysaccharide to the outer membrane of the cell. This is UDP-3-O-acylglucosamine N-acyltransferase from Xanthomonas oryzae pv. oryzae (strain MAFF 311018).